Consider the following 104-residue polypeptide: Large ribosomal subunit protein bL21 (104 aa).

The protein belongs to the bacterial ribosomal protein bL21 family. As to quaternary structure, part of the 50S ribosomal subunit. Contacts protein L20.

Its function is as follows. This protein binds to 23S rRNA in the presence of protein L20. The polypeptide is Large ribosomal subunit protein bL21 (Lactococcus lactis subsp. cremoris (strain MG1363)).